The chain runs to 143 residues: MAKKISGYIKLQVPAGTANPSPPLGPALGQRGVNIMEFCKAFNAATDGLEKGTPTPTIITVYADKSFSFVTKTPPATYLIKKAANLKSGSKEPGKISGGKIARSKLAEIAEIKMKDLNANDIEQATKIIEGSARSMGLEVTEG.

This sequence belongs to the universal ribosomal protein uL11 family. In terms of assembly, part of the ribosomal stalk of the 50S ribosomal subunit. Interacts with L10 and the large rRNA to form the base of the stalk. L10 forms an elongated spine to which L12 dimers bind in a sequential fashion forming a multimeric L10(L12)X complex. Post-translationally, one or more lysine residues are methylated.

In terms of biological role, forms part of the ribosomal stalk which helps the ribosome interact with GTP-bound translation factors. The chain is Large ribosomal subunit protein uL11 from Sphingopyxis alaskensis (strain DSM 13593 / LMG 18877 / RB2256) (Sphingomonas alaskensis).